A 138-amino-acid polypeptide reads, in one-letter code: Homeobox protein HD-11 (138 aa).

The homeobox DNA-binding region spans 30–89 (CTGKQMRKTRLQTCVLNRIFEISRFPSSKTIVDLALLINVHPKSIQKWFQNTRQAIRKKG).

It is found in the nucleus. The protein is Homeobox protein HD-11 (HD-11) of Encephalitozoon cuniculi (strain GB-M1) (Microsporidian parasite).